Here is a 388-residue protein sequence, read N- to C-terminus: Leucine aminopeptidase 1 (388 aa).

The N-terminal stretch at 1-19 (MRSSVLFSLYAATLVAAVA) is a signal peptide. A propeptide spanning residues 20–88 (HPKDPQIVLQ…TLNHKLSTES (69 aa)) is cleaved from the precursor. Asn-98 carries an N-linked (GlcNAc...) asparagine glycan. Residues His-187, Asp-206, Glu-245, and Asp-272 each coordinate Zn(2+). A disulfide bridge links Cys-321 with Cys-325. His-354 provides a ligand contact to Zn(2+).

The protein belongs to the peptidase M28 family. M28E subfamily. In terms of assembly, monomer. It depends on Zn(2+) as a cofactor.

It is found in the secreted. Extracellular aminopeptidase that allows assimilation of proteinaceous substrates. The polypeptide is Leucine aminopeptidase 1 (LAP1) (Leptosphaeria maculans (strain JN3 / isolate v23.1.3 / race Av1-4-5-6-7-8) (Blackleg fungus)).